The primary structure comprises 965 residues: Probable ion channel POLLUX (965 aa).

A compositionally biased stretch (low complexity) spans 1-11 (MAESDGGEASP). Disordered stretches follow at residues 1-76 (MAES…APRG) and 108-158 (GPHA…KSLA). A compositionally biased stretch (polar residues) spans 32-42 (LTKSRTISGSA). 2 stretches are compositionally biased toward low complexity: residues 52-66 (SNSS…SSTA) and 118-149 (RSQQ…ASVS). 4 helical membrane passes run 187–207 (LSPY…LAIW), 251–271 (ADWN…VFLV), 317–337 (LALL…LYVV), and 369–389 (IVSV…LGLV). 2 RCK N-terminal domains span residues 410–551 (VNHI…ETVV) and 670–818 (PEKI…DKSI).

Belongs to the castor/pollux (TC 1.A.1.23) family. In terms of tissue distribution, expressed in roots, leaves, stems and panicles.

The protein localises to the nucleus membrane. In terms of biological role, required for mycorrhizal symbiosis. In Oryza sativa subsp. japonica (Rice), this protein is Probable ion channel POLLUX.